Consider the following 253-residue polypeptide: Phosphate import ATP-binding protein PstB (253 aa).

Residues isoleucine 5 to valine 248 form the ABC transporter domain. An ATP-binding site is contributed by glycine 37 to serine 44.

The protein belongs to the ABC transporter superfamily. Phosphate importer (TC 3.A.1.7) family. In terms of assembly, the complex is composed of two ATP-binding proteins (PstB), two transmembrane proteins (PstC and PstA) and a solute-binding protein (PstS).

Its subcellular location is the cell membrane. The catalysed reaction is phosphate(out) + ATP + H2O = ADP + 2 phosphate(in) + H(+). Functionally, part of the ABC transporter complex PstSACB involved in phosphate import. Responsible for energy coupling to the transport system. This is Phosphate import ATP-binding protein PstB from Thermococcus kodakarensis (strain ATCC BAA-918 / JCM 12380 / KOD1) (Pyrococcus kodakaraensis (strain KOD1)).